The chain runs to 574 residues: DNA polymerase I (574 aa).

Positions 4–161 (EYVTGEEGLK…ELFPKMRDML (158 aa)) constitute a 3'-5' exonuclease domain.

The protein belongs to the DNA polymerase type-A family.

The catalysed reaction is DNA(n) + a 2'-deoxyribonucleoside 5'-triphosphate = DNA(n+1) + diphosphate. The sequence is that of DNA polymerase I (polA) from Aquifex aeolicus (strain VF5).